The sequence spans 773 residues: Beta-hexosaminidase B (773 aa).

Residues 1 to 19 (MKFNRLMALLFGVSSPLYA) form the signal peptide. 3 disulfides stabilise this stretch: Cys-46-Cys-53, Cys-389-Cys-397, and Cys-496-Cys-542. Glu-531 functions as the Proton donor in the catalytic mechanism.

The protein belongs to the glycosyl hydrolase 20 family.

It carries out the reaction Hydrolysis of terminal non-reducing N-acetyl-D-hexosamine residues in N-acetyl-beta-D-hexosaminides.. The protein is Beta-hexosaminidase B (nag096) of Pseudoalteromonas piscicida.